The primary structure comprises 736 residues: Phosphoribosylformylglycinamidine synthase subunit PurL (736 aa).

His-49 is a catalytic residue. 2 residues coordinate ATP: Tyr-52 and Lys-91. Glu-93 is a binding site for Mg(2+). Residues 94 to 97 and Arg-116 each bind substrate; that span reads SHNH. The active-site Proton acceptor is His-95. Mg(2+) is bound at residue Asp-117. Substrate is bound at residue Gln-240. Asp-268 provides a ligand contact to Mg(2+). 312 to 314 serves as a coordination point for substrate; the sequence is ESQ. Asp-493 and Gly-530 together coordinate ATP. Asn-531 lines the Mg(2+) pocket. Ser-533 is a binding site for substrate.

The protein belongs to the FGAMS family. In terms of assembly, monomer. Part of the FGAM synthase complex composed of 1 PurL, 1 PurQ and 2 PurS subunits.

The protein resides in the cytoplasm. The enzyme catalyses N(2)-formyl-N(1)-(5-phospho-beta-D-ribosyl)glycinamide + L-glutamine + ATP + H2O = 2-formamido-N(1)-(5-O-phospho-beta-D-ribosyl)acetamidine + L-glutamate + ADP + phosphate + H(+). The protein operates within purine metabolism; IMP biosynthesis via de novo pathway; 5-amino-1-(5-phospho-D-ribosyl)imidazole from N(2)-formyl-N(1)-(5-phospho-D-ribosyl)glycinamide: step 1/2. Functionally, part of the phosphoribosylformylglycinamidine synthase complex involved in the purines biosynthetic pathway. Catalyzes the ATP-dependent conversion of formylglycinamide ribonucleotide (FGAR) and glutamine to yield formylglycinamidine ribonucleotide (FGAM) and glutamate. The FGAM synthase complex is composed of three subunits. PurQ produces an ammonia molecule by converting glutamine to glutamate. PurL transfers the ammonia molecule to FGAR to form FGAM in an ATP-dependent manner. PurS interacts with PurQ and PurL and is thought to assist in the transfer of the ammonia molecule from PurQ to PurL. This chain is Phosphoribosylformylglycinamidine synthase subunit PurL, found in Rhodopseudomonas palustris (strain ATCC BAA-98 / CGA009).